The following is an 861-amino-acid chain: Leucine--tRNA ligase (861 aa).

The short motif at 42–52 (PYPSGKLHMGH) is the 'HIGH' region element. A 'KMSKS' region motif is present at residues 620–624 (KMSKS). Lys623 contributes to the ATP binding site.

The protein belongs to the class-I aminoacyl-tRNA synthetase family.

Its subcellular location is the cytoplasm. It catalyses the reaction tRNA(Leu) + L-leucine + ATP = L-leucyl-tRNA(Leu) + AMP + diphosphate. In Marinobacter nauticus (strain ATCC 700491 / DSM 11845 / VT8) (Marinobacter aquaeolei), this protein is Leucine--tRNA ligase.